Consider the following 155-residue polypeptide: Peptide deformylase (155 aa).

Fe cation is bound by residues cysteine 88 and histidine 130. Residue glutamate 131 is part of the active site. Histidine 134 lines the Fe cation pocket.

The protein belongs to the polypeptide deformylase family. Fe(2+) is required as a cofactor.

It catalyses the reaction N-terminal N-formyl-L-methionyl-[peptide] + H2O = N-terminal L-methionyl-[peptide] + formate. In terms of biological role, removes the formyl group from the N-terminal Met of newly synthesized proteins. Requires at least a dipeptide for an efficient rate of reaction. N-terminal L-methionine is a prerequisite for activity but the enzyme has broad specificity at other positions. The chain is Peptide deformylase from Pelotomaculum thermopropionicum (strain DSM 13744 / JCM 10971 / SI).